Consider the following 374-residue polypeptide: Guanine nucleotide-binding protein subunit alpha-15 (374 aa).

One can recognise a G-alpha domain in the interval 41 to 374 (GELKLLLLGT…ARYLDEINLL (334 aa)). Residues 44 to 57 (KLLLLGTGESGKST) are G1 motif. Residues 49–56 (GTGESGKS), 183–189 (LRSRMPT), 208–212 (DVGGQ), 277–280 (NKTD), and Ala-346 each bind GTP. The Mg(2+) site is built by Ser-56 and Thr-189. Positions 181-189 (DVLRSRMPT) are G2 motif. The G3 motif stretch occupies residues 204–213 (LRIVDVGGQK). The segment at 273-280 (ILFLNKTD) is G4 motif. Residues 344–349 (TCATDT) form a G5 motif region.

This sequence belongs to the G-alpha family. G(q) subfamily. As to quaternary structure, g proteins are composed of 3 units; alpha, beta and gamma. The alpha chain contains the guanine nucleotide binding site.

Its function is as follows. Guanine nucleotide-binding proteins (G proteins) are involved as modulators or transducers in various transmembrane signaling systems. This chain is Guanine nucleotide-binding protein subunit alpha-15 (GNA15), found in Oryctolagus cuniculus (Rabbit).